We begin with the raw amino-acid sequence, 193 residues long: Cell wall galactomannoprotein (193 aa).

An N-terminal signal peptide occupies residues 1–17 (MFFRILALLPLVFLVTA). N-linked (GlcNAc...) asparagine glycosylation is found at asparagine 38 and asparagine 173.

It belongs to the cell wall mannoprotein 1 family. Galactomannoprotein, glycosylated.

It is found in the secreted. Its subcellular location is the cell wall. Its function is as follows. Constitutive protein of the cell wall. The chain is Cell wall galactomannoprotein from Armillaria ostoyae (Armillaria root rot fungus).